We begin with the raw amino-acid sequence, 172 residues long: Photosystem I assembly protein Ycf3 (172 aa).

3 TPR repeats span residues 35–70 (AFTY…EIDP), 74–107 (SYIL…NPFL), and 122–155 (GERA…TPGN).

This sequence belongs to the Ycf3 family.

Its subcellular location is the plastid. It localises to the chloroplast thylakoid membrane. Essential for the assembly of the photosystem I (PSI) complex. May act as a chaperone-like factor to guide the assembly of the PSI subunits. The polypeptide is Photosystem I assembly protein Ycf3 (Dioscorea elephantipes (Elephant's foot yam)).